The primary structure comprises 205 residues: GTP-binding protein yptV5 (205 aa).

Residue 15 to 22 coordinates GTP; sequence GDSGVGKT. Positions 37–45 match the Effector region motif; the sequence is YKATIGADF. GTP-binding positions include 63–67 and 125–128; these read DTAGQ and NKID. 2 S-geranylgeranyl cysteine lipidation sites follow: cysteine 204 and cysteine 205.

Belongs to the small GTPase superfamily. Rab family.

Its subcellular location is the cell membrane. In terms of biological role, protein transport. Probably involved in vesicular traffic. The sequence is that of GTP-binding protein yptV5 (YPTV5) from Volvox carteri (Green alga).